We begin with the raw amino-acid sequence, 596 residues long: NADH-quinone oxidoreductase subunit C/D (596 aa).

The segment at 1–186 (MMNDNKYIHI…PAFTLTRKKE (186 aa)) is NADH dehydrogenase I subunit C. The segment at 210–596 (DFMFLNLGPN…IDFVMSDVDR (387 aa)) is NADH dehydrogenase I subunit D.

This sequence in the N-terminal section; belongs to the complex I 30 kDa subunit family. It in the C-terminal section; belongs to the complex I 49 kDa subunit family. As to quaternary structure, NDH-1 is composed of 13 different subunits. Subunits NuoB, CD, E, F, and G constitute the peripheral sector of the complex.

Its subcellular location is the cell inner membrane. The enzyme catalyses a quinone + NADH + 5 H(+)(in) = a quinol + NAD(+) + 4 H(+)(out). Its function is as follows. NDH-1 shuttles electrons from NADH, via FMN and iron-sulfur (Fe-S) centers, to quinones in the respiratory chain. The immediate electron acceptor for the enzyme in this species is believed to be ubiquinone. Couples the redox reaction to proton translocation (for every two electrons transferred, four hydrogen ions are translocated across the cytoplasmic membrane), and thus conserves the redox energy in a proton gradient. The chain is NADH-quinone oxidoreductase subunit C/D from Blochmanniella floridana.